The primary structure comprises 599 residues: Riboflavin biosynthesis protein PYRR, chloroplastic (599 aa).

A chloroplast-targeting transit peptide spans 1–17; that stretch reads MALSFRISSSSPLICRA. Residues 30-152 form the CMP/dCMP-type deaminase domain; the sequence is TTDAAFIRRA…ELRSHGIEVN (123 aa).

This sequence in the C-terminal section; belongs to the YbiA family.

Its subcellular location is the plastid. The protein localises to the chloroplast. It carries out the reaction 5-amino-6-(5-phospho-D-ribitylamino)uracil + NADP(+) = 5-amino-6-(5-phospho-D-ribosylamino)uracil + NADPH + H(+). It catalyses the reaction 2,5-diamino-6-hydroxy-4-(5-phosphoribosylamino)-pyrimidine + H2O = 2,5,6-triamino-4-hydroxypyrimidine + D-ribose 5-phosphate. The enzyme catalyses 5-amino-6-(5-phospho-D-ribosylamino)uracil + H2O = 5,6-diaminouracil + D-ribose 5-phosphate. The protein operates within cofactor biosynthesis; riboflavin biosynthesis; 5-amino-6-(D-ribitylamino)uracil from GTP: step 3/4. Functionally, pyrimidine reductase involved in the riboflavin biosynthesis pathway. Also has a non-functional N-terminal deaminase domain that lacks the catalytically essential zinc-binding residues. Catalyzes the hydrolysis of the N-glycosidic bond in the first two intermediates of riboflavin biosynthesis, which are highly reactive metabolites, yielding relatively innocuous products. Thus, can divert a surplus of harmful intermediates into relatively harmless products and pre-empt the damage these intermediates would otherwise do. Helps maintain flavin levels. Has no activity against GTP, nucleoside monophosphates or ADP-ribose. This Arabidopsis thaliana (Mouse-ear cress) protein is Riboflavin biosynthesis protein PYRR, chloroplastic (PYRR).